Reading from the N-terminus, the 92-residue chain is Progonadoliberin-1 (92 aa).

Residues 1–23 form the signal peptide; it reads MKPIQKLLAGLILLTWCVEGCSS. Position 24 is a pyrrolidone carboxylic acid (Gln24). Gly33 bears the Glycine amide mark.

It belongs to the GnRH family. Post-translationally, the precursor is cleaved by ACE, which removes the Gly-Lys-Arg peptide at the C-terminus, leading to mature hormone. The mature form of Gonadoliberin-1 is also cleaved and degraded by ACE.

It is found in the secreted. Stimulates the secretion of gonadotropins; it stimulates the secretion of both luteinizing and follicle-stimulating hormones. In Homo sapiens (Human), this protein is Progonadoliberin-1 (GNRH1).